The sequence spans 71 residues: DNA-directed RNA polymerase subunit 10-like protein (71 aa).

The Zn(2+) site is built by cysteine 7, cysteine 10, cysteine 44, and cysteine 45.

Belongs to the archaeal Rpo10/eukaryotic RPB10 RNA polymerase subunit family. In terms of assembly, interacts with IYO.

It localises to the nucleus. The chain is DNA-directed RNA polymerase subunit 10-like protein from Arabidopsis thaliana (Mouse-ear cress).